A 530-amino-acid chain; its full sequence is Meiosis 1 arrest protein (530 aa).

Residues 463–530 (LHPHWESRAP…SEWEKDPSRP (68 aa)) form a disordered region. Low complexity predominate over residues 503–516 (ASKMPAASKSSSDA).

It localises to the cytoplasm. Functionally, required for meiosis I progression during spermatogenesis. In Homo sapiens (Human), this protein is Meiosis 1 arrest protein (M1AP).